The following is a 487-amino-acid chain: Photosystem II CP43 reaction center protein (487 aa).

Positions 1 to 28 (MKVFVLGWLLKINLMKTLYSQRRFYHVE) are excised as a propeptide. Helical transmembrane passes span 83-107 (LFEVAHFVPEKPLYEQGLILIPHLA), 148-169 (LIGPDTLEESFPFFGYDWRDKN), 192-214 (KSLFVGGVYDTWAPGGGDVRFVS), 269-289 (KPFAWARRAFVWSGEAYLSYS), and 305-326 (WYNNTAYPSEFYGPTGPEASQA). Glu-381 is a binding site for [CaMn4O5] cluster. Residues 461–485 (RARAAAAGFEKGINRENEPVLSMRP) traverse the membrane as a helical segment.

Belongs to the PsbB/PsbC family. PsbC subfamily. PSII is composed of 1 copy each of membrane proteins PsbA, PsbB, PsbC, PsbD, PsbE, PsbF, PsbH, PsbI, PsbJ, PsbK, PsbL, PsbM, PsbT, PsbX, PsbY, PsbZ, Psb30/Ycf12, at least 3 peripheral proteins of the oxygen-evolving complex and a large number of cofactors. It forms dimeric complexes. The cofactor is Binds multiple chlorophylls and provides some of the ligands for the Ca-4Mn-5O cluster of the oxygen-evolving complex. It may also provide a ligand for a Cl- that is required for oxygen evolution. PSII binds additional chlorophylls, carotenoids and specific lipids..

It localises to the plastid. The protein resides in the chloroplast thylakoid membrane. Functionally, one of the components of the core complex of photosystem II (PSII). It binds chlorophyll and helps catalyze the primary light-induced photochemical processes of PSII. PSII is a light-driven water:plastoquinone oxidoreductase, using light energy to abstract electrons from H(2)O, generating O(2) and a proton gradient subsequently used for ATP formation. The protein is Photosystem II CP43 reaction center protein of Porphyra purpurea (Red seaweed).